Reading from the N-terminus, the 23-residue chain is FWGTLAKLALKAVPAVMGMIKKE.

It belongs to the non-disulfide-bridged peptide (NDBP) superfamily. Medium-length antimicrobial peptide (group 3) family. Ponericin-W subfamily. In terms of tissue distribution, expressed by the venom gland.

The protein resides in the secreted. It localises to the target cell membrane. May have antimicrobial properties, like most ant linear peptides. May act by disrupting the integrity of the bacterial cell membrane. The protein is U1-poneritoxin-Da3b of Dinoponera australis (Giant neotropical hunting ant).